The primary structure comprises 172 residues: Trypsin inhibitor DE-3 (172 aa).

2 disulfide bridges follow: Cys39-Cys83 and Cys132-Cys139.

The protein belongs to the protease inhibitor I3 (leguminous Kunitz-type inhibitor) family.

In terms of biological role, inhibition of trypsin. This Erythrina caffra (Kaffir tree) protein is Trypsin inhibitor DE-3.